Consider the following 438-residue polypeptide: Xylose isomerase (438 aa).

Active-site residues include His100 and Asp103. Glu231, Glu267, His270, Asp295, Asp306, Asp308, and Asp338 together coordinate Mg(2+).

This sequence belongs to the xylose isomerase family. As to quaternary structure, homotetramer. It depends on Mg(2+) as a cofactor.

The protein resides in the cytoplasm. It carries out the reaction alpha-D-xylose = alpha-D-xylulofuranose. The sequence is that of Xylose isomerase from Pseudomonas syringae pv. syringae (strain B728a).